The primary structure comprises 279 residues: Protein phosphatase 1 regulatory subunit 3E (279 aa).

2 positions are modified to phosphoserine: S16 and S33. Residues 28 to 87 (RSQRPSLEEESEEEPGEGGTRPGARSRAHVPGRGRRARSAPAGGGGARTARSRSPDTRKR) are disordered. The span at 51–65 (ARSRAHVPGRGRRAR) shows a compositional bias: basic residues. S66 bears the Phosphoserine mark. A PP1-binding motif motif is present at residues 87–90 (RVRF). The CBM21 domain maps to 154–259 (AARLQAQRIC…NNGGRDYALL (106 aa)). The tract at residues 176–198 (GSARVLDLAYEKRVSVRWSADGW) is glycogen-binding motif. The tract at residues 248–256 (WDNNGGRDY) is substrate-binding motif.

Its function is as follows. Acts as a glycogen-targeting subunit for PP1. PP1 is involved in glycogen metabolism and contributes to the activation of glycogen synthase leading to an increase in glycogen synthesis. The polypeptide is Protein phosphatase 1 regulatory subunit 3E (Ppp1r3e) (Mus musculus (Mouse)).